The chain runs to 543 residues: Thiamine transport system permease protein ThiP (543 aa).

The next 12 helical transmembrane spans lie at 19–39 (VAGGLALAFLATLAGGALLAL), 64–84 (FTIWQAVASSLRSVLFAIPIA), 102–122 (LFALPLALPALVAVLGVTSIY), 142–162 (DIYGIAGILIAHIFFNMPLAV), 205–225 (GMIGLVFMLCVTSFTTVLTLG), 250–270 (AVALTFTQLALTLLILLILRL), 300–320 (IIVITLGFLYVALPIAGVVVS), 343–363 (LALGFSAALLAVFLSLALVAA), 379–399 (GASLILVMPPIVIGAGWFILL), 406–426 (FVMAPLMVVTVNAAMAMPFAV), 468–488 (GMAFAFAMALSLGDLGTIALF), and 510–530 (FDAAGLALILGVLCLALMMIA). One can recognise an ABC transmembrane type-1 1 domain in the interval 62–266 (ARFTIWQAVA…QLALTLLILL (205 aa)). The ABC transmembrane type-1 2 domain maps to 339–530 (IATSLALGFS…VLCLALMMIA (192 aa)).

It belongs to the binding-protein-dependent transport system permease family. CysTW subfamily. As to quaternary structure, the complex is composed of two ATP-binding proteins (ThiQ), two transmembrane proteins (ThiP) and a solute-binding protein (ThiB).

The protein resides in the cell inner membrane. Functionally, part of the ABC transporter complex ThiBPQ involved in thiamine import. Probably responsible for the translocation of the substrate across the membrane. The protein is Thiamine transport system permease protein ThiP (thiP) of Brucella suis biovar 1 (strain 1330).